The chain runs to 1095 residues: DNA-directed RNA polymerase subunit beta (1095 aa).

The tract at residues 1069 to 1095 (DLMQDVNPRRSTPSRPTYESLGKEYEE) is disordered.

The protein belongs to the RNA polymerase beta chain family. In cyanobacteria the RNAP catalytic core is composed of 2 alpha, 1 beta, 1 beta', 1 gamma and 1 omega subunit. When a sigma factor is associated with the core the holoenzyme is formed, which can initiate transcription.

It catalyses the reaction RNA(n) + a ribonucleoside 5'-triphosphate = RNA(n+1) + diphosphate. DNA-dependent RNA polymerase catalyzes the transcription of DNA into RNA using the four ribonucleoside triphosphates as substrates. The polypeptide is DNA-directed RNA polymerase subunit beta (Prochlorococcus marinus (strain NATL1A)).